A 256-amino-acid polypeptide reads, in one-letter code: Complex I assembly factor TIMMDC1, mitochondrial (256 aa).

Residues 1–27 (MAQSDPPKSPDPPLPTSIRNPQTPESG) are disordered. 2 helical membrane passes run 111–131 (WGWR…GLTV) and 159–179 (VGLL…GALI).

Belongs to the Tim17/Tim22/Tim23 family. As to quaternary structure, associates with the intermediate 315 kDa subcomplex of incompletely assembled complex I.

Its subcellular location is the mitochondrion membrane. Functionally, chaperone protein involved in the assembly of the mitochondrial NADH:ubiquinone oxidoreductase complex (complex I). Participates in constructing the membrane arm of complex I. This Xenopus laevis (African clawed frog) protein is Complex I assembly factor TIMMDC1, mitochondrial (timmdc1).